We begin with the raw amino-acid sequence, 772 residues long: Mitochondrial intermediate peptidase (772 aa).

The transit peptide at 1 to 42 (MFANSARNALKKRPQNLQPFRFQGCLFSKRANRPLTTKVQHL) directs the protein to the mitochondrion. His556 serves as a coordination point for Zn(2+). The active site involves Glu557. Zn(2+) is bound by residues His560 and His563.

This sequence belongs to the peptidase M3 family. It depends on Zn(2+) as a cofactor.

It is found in the mitochondrion matrix. The enzyme catalyses Release of an N-terminal octapeptide as second stage of processing of some proteins imported into the mitochondrion.. Functionally, cleaves proteins, imported into the mitochondrion, to their mature size. While most mitochondrial precursor proteins are processed to the mature form in one step by mitochondrial processing peptidase (MPP), the sequential cleavage by MIP of an octapeptide after initial processing by MPP is a required step for a subgroup of nuclear-encoded precursor proteins destined for the matrix or the inner membrane. In Laccaria bicolor (strain S238N-H82 / ATCC MYA-4686) (Bicoloured deceiver), this protein is Mitochondrial intermediate peptidase (OCT1).